The chain runs to 436 residues: WD repeat domain phosphoinositide-interacting protein 2 (436 aa).

Residues 182 to 222 form a WD 1 repeat; the sequence is AHDSPLAALAFDASGTKLATASEKGTVIRVFSIPEGQKLFE. A L/FRRG motif motif is present at residues 223-226; sequence FRRG. WD repeat units lie at residues 228 to 267 and 311 to 349; these read KRCVSICSLAFSMDGMFLSASSNTETVHIFKLETVKEKPQ and GHKNICALATIQKIPRLLVGAADGYLYMYNLDPQEGGEC.

Belongs to the WD repeat PROPPIN family.

The protein localises to the preautophagosomal structure membrane. Component of the autophagy machinery that controls the major intracellular degradation process by which cytoplasmic materials are packaged into autophagosomes and delivered to lysosomes for degradation. Involved in an early step of the formation of preautophagosomal structures. This Gallus gallus (Chicken) protein is WD repeat domain phosphoinositide-interacting protein 2 (WIPI2).